The sequence spans 383 residues: D-aspartate oxidase 3 (383 aa).

Residues 1–17 form the signal peptide; sequence MLYALLLLFGGVSTVSS. 2 residues coordinate FAD: K56 and S63. Residues N152, N271, and N320 are each glycosylated (N-linked (GlcNAc...) asparagine). Residue T339 coordinates FAD. N371 carries an N-linked (GlcNAc...) asparagine glycan.

The protein belongs to the DAMOX/DASOX family. The cofactor is FAD. In both sexes, present in coelomocytes (at protein level). Expressed in hypodermal cells and the proximal gonadal sheath cells in adult hermaphrodites (at protein level). Also expressed in probable head mesodermal cells and unidentified cells in the head, and vulval muscles in adult hermaphrodites. Expressed in the seminal vesicle, spicule and tail cells in adult males (at protein level).

It is found in the secreted. It carries out the reaction D-aspartate + O2 + H2O = oxaloacetate + H2O2 + NH4(+). The enzyme catalyses D-glutamate + O2 + H2O = H2O2 + 2-oxoglutarate + NH4(+). Its function is as follows. Selectively catalyzes the oxidative deamination of acidic amino acids. Plays a role in the egg-laying events and maturation processes of the reproductive organs. This chain is D-aspartate oxidase 3 (ddo-3), found in Caenorhabditis elegans.